We begin with the raw amino-acid sequence, 251 residues long: Hydroxyacylglutathione hydrolase (251 aa).

Zn(2+)-binding residues include histidine 53, histidine 55, aspartate 57, histidine 58, histidine 110, aspartate 127, and histidine 165.

This sequence belongs to the metallo-beta-lactamase superfamily. Glyoxalase II family. As to quaternary structure, monomer. Zn(2+) is required as a cofactor.

It carries out the reaction an S-(2-hydroxyacyl)glutathione + H2O = a 2-hydroxy carboxylate + glutathione + H(+). It participates in secondary metabolite metabolism; methylglyoxal degradation; (R)-lactate from methylglyoxal: step 2/2. Thiolesterase that catalyzes the hydrolysis of S-D-lactoyl-glutathione to form glutathione and D-lactic acid. This chain is Hydroxyacylglutathione hydrolase, found in Escherichia coli O6:K15:H31 (strain 536 / UPEC).